Here is a 219-residue protein sequence, read N- to C-terminus: Tritrans,polycis-undecaprenyl-diphosphate synthase (geranylgeranyl-diphosphate specific) (219 aa).

Asp12 is an active-site residue. A Mg(2+)-binding site is contributed by Asp12. Substrate-binding positions include 13 to 16 (GNRR), Trp17, and 59 to 61 (SRD). The active-site Proton acceptor is the Asn62. Substrate-binding positions include Arg66, Arg168, and 174 to 176 (RLS). Residue Glu187 coordinates Mg(2+).

It belongs to the UPP synthase family. Homodimer. It depends on Mg(2+) as a cofactor.

It carries out the reaction geranylgeranyl diphosphate + 7 isopentenyl diphosphate = tri-trans,hepta-cis-undecaprenyl diphosphate + 7 diphosphate. Its function is as follows. Catalyzes the sequential condensation of isopentenyl diphosphate (IPP) with geranylgeranyl diphosphate (GGPP) to yield (2Z,6Z,10Z,14Z,18Z,22Z,26Z,30E,34E,38E)-undecaprenyl diphosphate (tritrans,heptacis-UPP). It is probably the precursor of glycosyl carrier lipids. This Aeropyrum pernix (strain ATCC 700893 / DSM 11879 / JCM 9820 / NBRC 100138 / K1) protein is Tritrans,polycis-undecaprenyl-diphosphate synthase (geranylgeranyl-diphosphate specific).